The following is a 265-amino-acid chain: NAD kinase 2 (265 aa).

Residue N51 is the Proton acceptor of the active site. Residues 122-123, R149, D151, 162-167, A186, and N226 each bind NAD(+); these read NE and TAYNKS.

It belongs to the NAD kinase family. A divalent metal cation is required as a cofactor.

It is found in the cytoplasm. It carries out the reaction NAD(+) + ATP = ADP + NADP(+) + H(+). Its function is as follows. Involved in the regulation of the intracellular balance of NAD and NADP, and is a key enzyme in the biosynthesis of NADP. Catalyzes specifically the phosphorylation on 2'-hydroxyl of the adenosine moiety of NAD to yield NADP. The protein is NAD kinase 2 of Halalkalibacterium halodurans (strain ATCC BAA-125 / DSM 18197 / FERM 7344 / JCM 9153 / C-125) (Bacillus halodurans).